We begin with the raw amino-acid sequence, 214 residues long: Thymidylate kinase (214 aa).

9–16 (GIEGCGKT) contacts ATP.

Belongs to the thymidylate kinase family.

It catalyses the reaction dTMP + ATP = dTDP + ADP. Its function is as follows. Phosphorylation of dTMP to form dTDP in both de novo and salvage pathways of dTTP synthesis. This is Thymidylate kinase from Geotalea daltonii (strain DSM 22248 / JCM 15807 / FRC-32) (Geobacter daltonii).